The following is a 247-amino-acid chain: Spermatogenesis-associated protein 46 (247 aa).

The interval 125–164 (QRDSCLPEDTADSVCSSSPSPENTCPREATKKSRPGPDTT) is disordered. The span at 137 to 147 (SVCSSSPSPEN) shows a compositional bias: polar residues.

The protein resides in the nucleus membrane. Functionally, plays a role in spermiogenesis and fertilization. The protein is Spermatogenesis-associated protein 46 (SPATA46) of Bos taurus (Bovine).